We begin with the raw amino-acid sequence, 162 residues long: Shikimate kinase (162 aa).

ATP is bound at residue 11-16 (GSGKSS). Residue serine 15 coordinates Mg(2+). Positions 33, 57, and 80 each coordinate substrate. Arginine 116 is an ATP binding site. Substrate is bound at residue arginine 132.

The protein belongs to the shikimate kinase family. Monomer. Mg(2+) is required as a cofactor.

It is found in the cytoplasm. The catalysed reaction is shikimate + ATP = 3-phosphoshikimate + ADP + H(+). It participates in metabolic intermediate biosynthesis; chorismate biosynthesis; chorismate from D-erythrose 4-phosphate and phosphoenolpyruvate: step 5/7. In terms of biological role, catalyzes the specific phosphorylation of the 3-hydroxyl group of shikimic acid using ATP as a cosubstrate. The protein is Shikimate kinase of Helicobacter pylori (strain P12).